A 302-amino-acid polypeptide reads, in one-letter code: Oxygen-dependent coproporphyrinogen-III oxidase (302 aa).

Ser90 provides a ligand contact to substrate. A divalent metal cation-binding residues include His94 and His104. His104 functions as the Proton donor in the catalytic mechanism. Position 106-108 (106-108 (NVR)) interacts with substrate. Residues His143 and His173 each contribute to the a divalent metal cation site. Residues 238 to 273 (YVEFNLIYDRGTIFGLQSNGRTESILLSMPPIVKWR) form an important for dimerization region.

Belongs to the aerobic coproporphyrinogen-III oxidase family. In terms of assembly, homodimer. It depends on a divalent metal cation as a cofactor.

The protein resides in the cytoplasm. The enzyme catalyses coproporphyrinogen III + O2 + 2 H(+) = protoporphyrinogen IX + 2 CO2 + 2 H2O. Its pathway is porphyrin-containing compound metabolism; protoporphyrin-IX biosynthesis; protoporphyrinogen-IX from coproporphyrinogen-III (O2 route): step 1/1. Involved in the heme biosynthesis. Catalyzes the aerobic oxidative decarboxylation of propionate groups of rings A and B of coproporphyrinogen-III to yield the vinyl groups in protoporphyrinogen-IX. The polypeptide is Oxygen-dependent coproporphyrinogen-III oxidase (Methylobacillus flagellatus (strain ATCC 51484 / DSM 6875 / VKM B-1610 / KT)).